The following is a 251-amino-acid chain: Hydroxyacylglutathione hydrolase (251 aa).

Zn(2+) is bound by residues His53, His55, Asp57, His58, His110, Asp127, and His165.

The protein belongs to the metallo-beta-lactamase superfamily. Glyoxalase II family. Monomer. Zn(2+) serves as cofactor.

It catalyses the reaction an S-(2-hydroxyacyl)glutathione + H2O = a 2-hydroxy carboxylate + glutathione + H(+). It participates in secondary metabolite metabolism; methylglyoxal degradation; (R)-lactate from methylglyoxal: step 2/2. In terms of biological role, thiolesterase that catalyzes the hydrolysis of S-D-lactoyl-glutathione to form glutathione and D-lactic acid. In Salmonella paratyphi A (strain ATCC 9150 / SARB42), this protein is Hydroxyacylglutathione hydrolase.